The chain runs to 242 residues: Uridylate kinase (242 aa).

11 to 14 (KLSG) lines the ATP pocket. The segment at 19–24 (GEKGVG) is involved in allosteric activation by GTP. Residue Gly-53 participates in UMP binding. ATP contacts are provided by Gly-54 and Arg-58. UMP-binding positions include Asp-73 and 134–141 (IGSPYFST). 3 residues coordinate ATP: Asn-162, Tyr-168, and Asp-171.

This sequence belongs to the UMP kinase family. Homohexamer.

It is found in the cytoplasm. It carries out the reaction UMP + ATP = UDP + ADP. It participates in pyrimidine metabolism; CTP biosynthesis via de novo pathway; UDP from UMP (UMPK route): step 1/1. Allosterically activated by GTP. Inhibited by UTP. Functionally, catalyzes the reversible phosphorylation of UMP to UDP. In Streptococcus pyogenes serotype M1, this protein is Uridylate kinase.